We begin with the raw amino-acid sequence, 37 residues long: Cytochrome b6-f complex subunit 5 (37 aa).

Residues 5 to 25 (LLCGIVLGLIPVTLAGLFFAA) traverse the membrane as a helical segment.

This sequence belongs to the PetG family. As to quaternary structure, the 4 large subunits of the cytochrome b6-f complex are cytochrome b6, subunit IV (17 kDa polypeptide, PetD), cytochrome f and the Rieske protein, while the 4 small subunits are PetG, PetL, PetM and PetN. The complex functions as a dimer.

Its subcellular location is the cellular thylakoid membrane. Its function is as follows. Component of the cytochrome b6-f complex, which mediates electron transfer between photosystem II (PSII) and photosystem I (PSI), cyclic electron flow around PSI, and state transitions. PetG is required for either the stability or assembly of the cytochrome b6-f complex. This is Cytochrome b6-f complex subunit 5 from Thermosynechococcus vestitus (strain NIES-2133 / IAM M-273 / BP-1).